A 180-amino-acid chain; its full sequence is CASP-like protein XL3 (180 aa).

Residues 1–7 lie on the Cytoplasmic side of the membrane; sequence MELSIQK. A helical transmembrane segment spans residues 8–28; the sequence is IEALIRLSTIVMLVLTACLIG. The Extracellular portion of the chain corresponds to 29-49; it reads LDSQTKVIFYVQKKASFKDLR. Residues 50–70 form a helical membrane-spanning segment; that stretch reads ALVGLLYITSLAAAYNLLQLC. Residues 71 to 98 lie on the Cytoplasmic side of the membrane; sequence CSSFSASYKGTSLQSYAYLAWLRYILDQ. Residues 99–119 form a helical membrane-spanning segment; the sequence is AVVYAVFAGNLAALEHSFLVL. Topologically, residues 120–140 are extracellular; that stretch reads TGEENFQWLKWCNKYTRFCTQ. A helical transmembrane segment spans residues 141 to 161; that stretch reads IGGSLLCGFVASLLMFSIASI. Residues 162–180 lie on the Cytoplasmic side of the membrane; the sequence is SAFNLFRQYSPTKFMHLKL.

Belongs to the Casparian strip membrane proteins (CASP) family. Homodimer and heterodimers.

It is found in the cell membrane. The chain is CASP-like protein XL3 (XL3) from Gossypium hirsutum (Upland cotton).